Reading from the N-terminus, the 507-residue chain is Histidine ammonia-lyase (507 aa).

Positions 141–143 (ASG) form a cross-link, 5-imidazolinone (Ala-Gly). At serine 142 the chain carries 2,3-didehydroalanine (Ser).

Belongs to the PAL/histidase family. Post-translationally, contains an active site 4-methylidene-imidazol-5-one (MIO), which is formed autocatalytically by cyclization and dehydration of residues Ala-Ser-Gly.

Its subcellular location is the cytoplasm. The enzyme catalyses L-histidine = trans-urocanate + NH4(+). Its pathway is amino-acid degradation; L-histidine degradation into L-glutamate; N-formimidoyl-L-glutamate from L-histidine: step 1/3. The polypeptide is Histidine ammonia-lyase (Natranaerobius thermophilus (strain ATCC BAA-1301 / DSM 18059 / JW/NM-WN-LF)).